Consider the following 426-residue polypeptide: Neuromedin-U receptor 1 (426 aa).

Over 1 to 65 (MTPLCLNCSV…QTELFMPICA (65 aa)) the chain is Extracellular. N-linked (GlcNAc...) asparagine glycosylation is found at N7, N27, and N41. The chain crosses the membrane as a helical span at residues 66-86 (TYLLIFVVGAVGNGLTCLVIL). The Cytoplasmic segment spans residues 87 to 97 (RHKAMRTPTNY). The chain crosses the membrane as a helical span at residues 98–118 (YLFSLAVSDLLVLLVGLPLEL). Over 119-138 (YEMWHNYPFLLGVGGCYFRT) the chain is Extracellular. The cysteines at positions 134 and 219 are disulfide-linked. Residues 139-161 (LLFEMVCLASVLNVTALSVERYV) traverse the membrane as a helical segment. Topologically, residues 162-181 (AVVHPLQARSMVTRAHVRRV) are cytoplasmic. The chain crosses the membrane as a helical span at residues 182 to 202 (LGAVWGLAMLCSLPNTSLHGI). The Extracellular segment spans residues 203–235 (RQLHVPCRGPVPDSAVCMLVRPRALYNMVVQTT). Residues 236 to 256 (ALLFFCLPMAIMSVLYLLIGL) traverse the membrane as a helical segment. At 257–294 (RLRRERLLLMQEAKGRGSAAARSRYTCRLQQHDRGRRQ) the chain is on the cytoplasmic side. A helical transmembrane segment spans residues 295–315 (VTKMLFVLVVVFGICWAPFHA). Residues 316–338 (DRVMWSVVSQWTDGLHLAFQHVH) lie on the Extracellular side of the membrane. A helical transmembrane segment spans residues 339-359 (VISGIFFYLGSAANPVLYSLM). The Cytoplasmic segment spans residues 360–426 (SSRFRETFQE…PEAQQETDPS (67 aa)).

It belongs to the G-protein coupled receptor 1 family. In terms of tissue distribution, expressed in greatest abundance in peripheral organs, particularly in elements of the gastrointestinal and urogenital systems with highest levels in testes. In central nervous system structures express levels are much lower than those seen in peripheral organs. Within the CNS, has been detected in highest abundance in the cerebellum, dorsal root ganglia, hippocampus, and spinal cord.

The protein localises to the cell membrane. Its function is as follows. Receptor for the neuromedin-U and neuromedin-S neuropeptides. This is Neuromedin-U receptor 1 (NMUR1) from Homo sapiens (Human).